The chain runs to 2273 residues: Linear gramicidin synthase subunit A (2273 aa).

The segment at 1-144 (MRILFLTTFM…AIEELFIREW (144 aa)) is GART. 2 Carrier domains span residues 693–767 (APTD…TEQK) and 1724–1798 (APRT…TSEQ). O-(pantetheine 4'-phosphoryl)serine occurs at positions 728 and 1759.

This sequence belongs to the ATP-dependent AMP-binding enzyme family. As to quaternary structure, large multienzyme complex composed of 4 subunits; LgrA, LgrB, LgrC and LgrD. The cofactor is pantetheine 4'-phosphate.

Its function is as follows. Activates valine (or leucine, but much less frequently), and then glycine and catalyzes the formation of the peptide bond in the first step of peptide synthesis. This enzyme may also play a role in N-formylation of the first amino acid residue in the synthesized dipeptide. The protein is Linear gramicidin synthase subunit A (lgrA) of Brevibacillus parabrevis.